The chain runs to 638 residues: ATP-dependent zinc metalloprotease FtsH (638 aa).

Over 1-4 (MNNQ) the chain is Cytoplasmic. A helical transmembrane segment spans residues 5-25 (GKNIIVWAVIFVFVILLFNVF). Over 26-103 (QSDGLLSSKN…VVPPETRMNT (78 aa)) the chain is Periplasmic. Residues 104–124 (FLSFLISWFPMLLLIGVWVFF) form a helical membrane-spanning segment. Residues 125 to 638 (MRQMHGGGKA…PIKAKKEDKS (514 aa)) lie on the Cytoplasmic side of the membrane. 195–202 (GPPGTGKT) serves as a coordination point for ATP. Histidine 417 is a binding site for Zn(2+). The active site involves glutamate 418. The Zn(2+) site is built by histidine 421 and aspartate 495. A disordered region spans residues 523–544 (SASEDMYTNRNSSSDRSESTSE).

It in the central section; belongs to the AAA ATPase family. This sequence in the C-terminal section; belongs to the peptidase M41 family. Homohexamer. Zn(2+) is required as a cofactor.

Its subcellular location is the cell inner membrane. Functionally, acts as a processive, ATP-dependent zinc metallopeptidase for both cytoplasmic and membrane proteins. Plays a role in the quality control of integral membrane proteins. This Rickettsia bellii (strain RML369-C) protein is ATP-dependent zinc metalloprotease FtsH.